A 383-amino-acid chain; its full sequence is ATP phosphoribosyltransferase regulatory subunit (383 aa).

This sequence belongs to the class-II aminoacyl-tRNA synthetase family. HisZ subfamily. Heteromultimer composed of HisG and HisZ subunits.

It is found in the cytoplasm. Its pathway is amino-acid biosynthesis; L-histidine biosynthesis; L-histidine from 5-phospho-alpha-D-ribose 1-diphosphate: step 1/9. Functionally, required for the first step of histidine biosynthesis. May allow the feedback regulation of ATP phosphoribosyltransferase activity by histidine. The chain is ATP phosphoribosyltransferase regulatory subunit from Paraburkholderia phytofirmans (strain DSM 17436 / LMG 22146 / PsJN) (Burkholderia phytofirmans).